The chain runs to 347 residues: Fc receptor-like A (347 aa).

The signal sequence occupies residues 1 to 27 (MKLSCMLIEWALYVCPAVLLATQMSLA). Ig-like C2-type domains are found at residues 77–166 (PFHL…ETAS) and 179–257 (PVLK…RQIS). 2 disulfide bridges follow: Cys106-Cys150 and Cys199-Cys247. Positions 272 to 296 (KPATPETPPPAKAPGPLPLLPTPSD) are disordered. Residues 276–292 (PETPPPAKAPGPLPLLP) show a composition bias toward pro residues.

Monomer or homodimer; disulfide-linked.

Its subcellular location is the cytoplasm. Functionally, may be implicated in B-cell differentiation and lymphomagenesis. This is Fc receptor-like A (Fcrla) from Rattus norvegicus (Rat).